A 131-amino-acid polypeptide reads, in one-letter code: D-ribose pyranase (131 aa).

H20 functions as the Proton donor in the catalytic mechanism. Residues D28, H98, and 120-122 (YAN) each bind substrate.

This sequence belongs to the RbsD / FucU family. RbsD subfamily. In terms of assembly, homodecamer.

It localises to the cytoplasm. It carries out the reaction beta-D-ribopyranose = beta-D-ribofuranose. It functions in the pathway carbohydrate metabolism; D-ribose degradation; D-ribose 5-phosphate from beta-D-ribopyranose: step 1/2. Its function is as follows. Catalyzes the interconversion of beta-pyran and beta-furan forms of D-ribose. The protein is D-ribose pyranase of Clostridium perfringens (strain ATCC 13124 / DSM 756 / JCM 1290 / NCIMB 6125 / NCTC 8237 / Type A).